The following is a 298-amino-acid chain: Glyoxalase domain-containing protein 4 (298 aa).

The region spanning arginine 5–arginine 130 is the VOC 1 domain. Lysine 109 carries the post-translational modification N6-succinyllysine. Residue serine 131 is modified to Phosphoserine. The 122-residue stretch at proline 137 to aspartate 258 folds into the VOC 2 domain. Lysine 273 carries the N6-succinyllysine modification.

The protein belongs to the glyoxalase I family. Interacts with NUDT9.

The protein localises to the mitochondrion. The chain is Glyoxalase domain-containing protein 4 (Glod4) from Mus musculus (Mouse).